We begin with the raw amino-acid sequence, 299 residues long: ATP phosphoribosyltransferase (299 aa).

The protein belongs to the ATP phosphoribosyltransferase family. Long subfamily. Requires Mg(2+) as cofactor.

The protein localises to the cytoplasm. The catalysed reaction is 1-(5-phospho-beta-D-ribosyl)-ATP + diphosphate = 5-phospho-alpha-D-ribose 1-diphosphate + ATP. Its pathway is amino-acid biosynthesis; L-histidine biosynthesis; L-histidine from 5-phospho-alpha-D-ribose 1-diphosphate: step 1/9. Feedback inhibited by histidine. Its function is as follows. Catalyzes the condensation of ATP and 5-phosphoribose 1-diphosphate to form N'-(5'-phosphoribosyl)-ATP (PR-ATP). Has a crucial role in the pathway because the rate of histidine biosynthesis seems to be controlled primarily by regulation of HisG enzymatic activity. This Shewanella baltica (strain OS155 / ATCC BAA-1091) protein is ATP phosphoribosyltransferase.